Reading from the N-terminus, the 412-residue chain is Shaggy-related protein kinase zeta (412 aa).

The span at 1-19 (MTSIPLGPPQPPSLAPQPP) shows a compositional bias: pro residues. The interval 1–33 (MTSIPLGPPQPPSLAPQPPHLHGGDSLKRRPDI) is disordered. Basic and acidic residues predominate over residues 22–33 (HGGDSLKRRPDI). Residue S26 is modified to Phosphoserine. Positions 72–356 (YMAERVVGTG…ALEACAHPFF (285 aa)) constitute a Protein kinase domain. ATP-binding positions include 78–86 (VGTGSFGIV) and K101. Residue S127 is modified to Phosphoserine. A phosphothreonine mark is found at T136 and T137. D197 serves as the catalytic Proton acceptor. At S219 the chain carries Phosphoserine. At Y232 the chain carries Phosphotyrosine. S252 carries the post-translational modification Phosphoserine. T293 bears the Phosphothreonine mark. At S342 the chain carries Phosphoserine. T346 carries the phosphothreonine modification.

The protein belongs to the protein kinase superfamily. CMGC Ser/Thr protein kinase family. GSK-3 subfamily. As to quaternary structure, binds to KIB1. Interacts with beet curly top virus AL4/C4 and tomato golden mosaic virus AL4/AC4. Autophosphorylated mainly on threonine and serine residues.

The enzyme catalyses L-seryl-[protein] + ATP = O-phospho-L-seryl-[protein] + ADP + H(+). It catalyses the reaction L-threonyl-[protein] + ATP = O-phospho-L-threonyl-[protein] + ADP + H(+). Functionally, may mediate extracellular signals to regulate transcription in differentiating cells. The protein is Shaggy-related protein kinase zeta (ASK6) of Arabidopsis thaliana (Mouse-ear cress).